The following is a 239-amino-acid chain: MKLSTIFTAFAATIATVAGYETTGSKQTVDILIDYIIKETPELSQNDVANWENGDTVTLQYVVNNNEESEITVVGVTGQFKNPVNNEIVTNLTTGKVGPIAVPPGEAIKFDQKINVDLIPANYELIPYVFIAQDSLIKVIPCRGQLATIVDAAVSFFDPRLIFLELVLLITFAGLIYVGYEIWGKQYFKGVASVKAKKVSAAKASSPVASGPSTTSATGYDTNWIPESHLKQKKTKKVN.

Residues 1–19 (MKLSTIFTAFAATIATVAG) form the signal peptide. At 20-161 (YETTGSKQTV…AAVSFFDPRL (142 aa)) the chain is on the lumenal side. A helical transmembrane segment spans residues 162 to 182 (IFLELVLLITFAGLIYVGYEI). Residues 183-239 (WGKQYFKGVASVKAKKVSAAKASSPVASGPSTTSATGYDTNWIPESHLKQKKTKKVN) are Cytoplasmic-facing. Positions 201-213 (AAKASSPVASGPS) are enriched in low complexity. The interval 201 to 222 (AAKASSPVASGPSTTSATGYDT) is disordered.

This sequence belongs to the IRC22 family.

It is found in the endoplasmic reticulum membrane. Is probably involved in a pathway contributing to genomic integrity. The sequence is that of Increased recombination centers protein 22-1 (IRC22-1) from Candida albicans (strain WO-1) (Yeast).